The chain runs to 764 residues: Probable cyclic nucleotide-gated ion channel 20, chloroplastic (764 aa).

The N-terminal 25 residues, 1–25 (MASHNENDDIPMLPISDPSSRTRAR), are a transit peptide targeting the chloroplast. Residues 1–40 (MASHNENDDIPMLPISDPSSRTRARAFTSRSRSVSLSNPT) are disordered. Over residues 19 to 33 (SSRTRARAFTSRSRS) the composition is skewed to low complexity. Topologically, residues 26–204 (AFTSRSRSVS…PHAKEVQTWT (179 aa)) are stromal. Residues 205-225 (KFFALSCLLAIFIDPLFFFLI) form a helical membrane-spanning segment. At 226-242 (KVQEQNKCIMIDWPMTK) the chain is on the lumenal side. A helical membrane pass occupies residues 243 to 263 (AFVAVRSVTDVIFTMNILLQF). The Stromal segment spans residues 264-295 (RLAYVARESTVVGAGQLVSHPKKIALHYLKGK). Residues 296–316 (FFLDLFIVMPLPQILILWIIP) traverse the membrane as a helical segment. Residues 317 to 329 (AHLGASGANYAKN) are Lumenal-facing. Residues 330 to 350 (LLRAAVLFQYIPKLYRLLPFL) traverse the membrane as a helical segment. Topologically, residues 351 to 366 (AGQTPTGFIFESAWAN) are stromal. A helical transmembrane segment spans residues 367–387 (FVINLLTFMLAGHVVGSCWYL). Topologically, residues 388-488 (FGLQRVNQCL…GNQVPSYFLG (101 aa)) are lumenal. Residues 489–509 (EVFFTMGIIGLGLLLFALLIG) traverse the membrane as a helical segment. Over 510 to 764 (NMQNFLQALG…LCTPQSSYSL (255 aa)) the chain is Stromal. Residues 593-710 (IFSL…EDVT) and glutamate 658 each bind a nucleoside 3',5'-cyclic phosphate. A calmodulin-binding region spans residues 713-729 (FSRFLRSHRVQGAIRYD). Residues 734–763 (RLRAARQIQVAWRYRRRRLHRLCTPQSSYS) form the IQ domain.

It belongs to the cyclic nucleotide-gated cation channel (TC 1.A.1.5) family. Homotetramer or heterotetramer.

The protein localises to the plastid. It localises to the chloroplast thylakoid membrane. In terms of biological role, probable cyclic nucleotide-gated ion channel. The protein is Probable cyclic nucleotide-gated ion channel 20, chloroplastic (CNGC20) of Arabidopsis thaliana (Mouse-ear cress).